The primary structure comprises 99 residues: Secreted RxLR effector protein 94 (99 aa).

A RxLR-dEER motif is present at residues 35-55; sequence RQLRQSANPSKAWHQWKSETR.

It belongs to the RxLR effector family.

It is found in the secreted. Its subcellular location is the host nucleus. It localises to the host cytoplasm. In terms of biological role, secreted effector that completely suppresses the host cell death induced by cell death-inducing proteins. The protein is Secreted RxLR effector protein 94 of Plasmopara viticola (Downy mildew of grapevine).